A 311-amino-acid polypeptide reads, in one-letter code: Glycerol-3-phosphate dehydrogenase [NAD(P)+] (311 aa).

Residues Trp-11, Arg-30, Arg-31, and Lys-95 each coordinate NADPH. Sn-glycerol 3-phosphate contacts are provided by Lys-95, Gly-123, and Ser-125. Position 127 (Ala-127) interacts with NADPH. Sn-glycerol 3-phosphate contacts are provided by Lys-177, Asp-230, Ser-240, Arg-241, and Asn-242. Residue Lys-177 is the Proton acceptor of the active site. An NADPH-binding site is contributed by Arg-241. Positions 265 and 267 each coordinate NADPH.

It belongs to the NAD-dependent glycerol-3-phosphate dehydrogenase family.

It localises to the cytoplasm. The enzyme catalyses sn-glycerol 3-phosphate + NAD(+) = dihydroxyacetone phosphate + NADH + H(+). It catalyses the reaction sn-glycerol 3-phosphate + NADP(+) = dihydroxyacetone phosphate + NADPH + H(+). The protein operates within membrane lipid metabolism; glycerophospholipid metabolism. Functionally, catalyzes the reduction of the glycolytic intermediate dihydroxyacetone phosphate (DHAP) to sn-glycerol 3-phosphate (G3P), the key precursor for phospholipid synthesis. The protein is Glycerol-3-phosphate dehydrogenase [NAD(P)+] of Bartonella bacilliformis (strain ATCC 35685 / KC583 / Herrer 020/F12,63).